The sequence spans 410 residues: uncharacterized protein (410 aa).

Residue His87 participates in Zn(2+) binding. Asp89 is a catalytic residue. Zn(2+) is bound at residue Asp120. The active-site Proton acceptor is the Glu154. The Zn(2+) site is built by Glu155, Asp184, and His387.

Belongs to the peptidase M20A family. It depends on Zn(2+) as a cofactor. Co(2+) is required as a cofactor.

This is an uncharacterized protein from Methanocaldococcus jannaschii (strain ATCC 43067 / DSM 2661 / JAL-1 / JCM 10045 / NBRC 100440) (Methanococcus jannaschii).